The following is a 576-amino-acid chain: Formate--tetrahydrofolate ligase 2 (576 aa).

An ATP-binding site is contributed by 69–76 (TPLGEGKT).

This sequence belongs to the formate--tetrahydrofolate ligase family.

The catalysed reaction is (6S)-5,6,7,8-tetrahydrofolate + formate + ATP = (6R)-10-formyltetrahydrofolate + ADP + phosphate. It functions in the pathway one-carbon metabolism; tetrahydrofolate interconversion. This is Formate--tetrahydrofolate ligase 2 from Rubrobacter xylanophilus (strain DSM 9941 / JCM 11954 / NBRC 16129 / PRD-1).